Consider the following 236-residue polypeptide: Small ribosomal subunit protein uS3 (236 aa).

The region spanning 39-107 is the KH type-2 domain; the sequence is IREVLEKQLK…EVHLNIVEVR (69 aa). A disordered region spans residues 214–236; sequence ASERRALEGGDSGGGRSRRDDRG.

Belongs to the universal ribosomal protein uS3 family. Part of the 30S ribosomal subunit. Forms a tight complex with proteins S10 and S14.

Its function is as follows. Binds the lower part of the 30S subunit head. Binds mRNA in the 70S ribosome, positioning it for translation. The polypeptide is Small ribosomal subunit protein uS3 (Parvibaculum lavamentivorans (strain DS-1 / DSM 13023 / NCIMB 13966)).